A 382-amino-acid chain; its full sequence is Zinc metalloproteinase nas-7 (382 aa).

Residues 1-18 (MLLPWIITIVTVIPATLG) form the signal peptide. A propeptide spanning residues 19 to 79 (HRNRVQDDEM…DIRLPRRHKR (61 aa)) is cleaved from the precursor. Positions 80–273 (NGVSRAAKLW…SKINRMYNCP (194 aa)) constitute a Peptidase M12A domain. Disulfide bonds link C122–C272, C144–C163, C348–C382, C355–C375, and C362–C379. Zn(2+) is bound at residue H171. Residue E172 is part of the active site. H175 and H181 together coordinate Zn(2+). The 35-residue stretch at 348 to 382 (CEDRITVCWWTADRCRSPAIYQVMSSLCPKTCKFC) folds into the ShKT domain.

Zn(2+) is required as a cofactor. As to expression, expressed in the head of adult hermaphrodites but not within pharynx cells. Expressed in pharyngeal muscles, mc cells, intestine, hypodermal seam cells, arcade cells, spermatheca, vulva and rectal epithelial cells.

The protein localises to the secreted. In terms of biological role, metalloprotease. This is Zinc metalloproteinase nas-7 (nas-7) from Caenorhabditis elegans.